The chain runs to 475 residues: Trifunctional enzyme subunit beta, mitochondrial (475 aa).

Residues 1–34 constitute a mitochondrion transit peptide; that stretch reads MTTILTSTFRNLSTTSKWALRSSIRPLSCSSQLH. Residue K53 is modified to N6-succinyllysine. At K73 the chain carries N6-acetyllysine; alternate. An N6-succinyllysine; alternate modification is found at K73. Catalysis depends on C139, which acts as the Acyl-thioester intermediate. An intramembrane segment occupies 174-221; the sequence is IRHSRNMRKMMLDLNKAKTLGQRLSLLSKFRLNFLSPELPAVAEFSTN. Position 189 is an N6-acetyllysine; alternate (K189). K189 carries the N6-succinyllysine; alternate modification. Residues K191, K273, and K292 each carry the N6-succinyllysine modification. Position 294 is an N6-acetyllysine; alternate (K294). Position 294 is an N6-succinyllysine; alternate (K294). K299 carries the post-translational modification N6-acetyllysine. At K333 the chain carries N6-acetyllysine; alternate. K333 is subject to N6-succinyllysine; alternate. N6-acetyllysine is present on residues K349 and K362. Residue C459 is the Proton donor/acceptor of the active site.

This sequence belongs to the thiolase-like superfamily. Thiolase family. As to quaternary structure, heterotetramer of 2 alpha/HADHA and 2 beta/HADHB subunits; forms the mitochondrial trifunctional enzyme. Also purified as higher order heterooligomers including a 4 alpha/HADHA and 4 beta/HADHB heterooligomer which physiological significance remains unclear. The mitochondrial trifunctional enzyme interacts with MTLN. Interacts with RSAD2/viperin. Acetylation of Lys-202 is observed in liver mitochondria from fasted mice but not from fed mice.

The protein resides in the mitochondrion. The protein localises to the mitochondrion inner membrane. It is found in the mitochondrion outer membrane. Its subcellular location is the endoplasmic reticulum. The enzyme catalyses an acyl-CoA + acetyl-CoA = a 3-oxoacyl-CoA + CoA. It carries out the reaction butanoyl-CoA + acetyl-CoA = 3-oxohexanoyl-CoA + CoA. It catalyses the reaction hexanoyl-CoA + acetyl-CoA = 3-oxooctanoyl-CoA + CoA. The catalysed reaction is octanoyl-CoA + acetyl-CoA = 3-oxodecanoyl-CoA + CoA. The enzyme catalyses decanoyl-CoA + acetyl-CoA = 3-oxododecanoyl-CoA + CoA. It carries out the reaction dodecanoyl-CoA + acetyl-CoA = 3-oxotetradecanoyl-CoA + CoA. It catalyses the reaction tetradecanoyl-CoA + acetyl-CoA = 3-oxohexadecanoyl-CoA + CoA. Its pathway is lipid metabolism; fatty acid beta-oxidation. Functionally, mitochondrial trifunctional enzyme catalyzes the last three of the four reactions of the mitochondrial beta-oxidation pathway. The mitochondrial beta-oxidation pathway is the major energy-producing process in tissues and is performed through four consecutive reactions breaking down fatty acids into acetyl-CoA. Among the enzymes involved in this pathway, the trifunctional enzyme exhibits specificity for long-chain fatty acids. Mitochondrial trifunctional enzyme is a heterotetrameric complex composed of two proteins, the trifunctional enzyme subunit alpha/HADHA carries the 2,3-enoyl-CoA hydratase and the 3-hydroxyacyl-CoA dehydrogenase activities, while the trifunctional enzyme subunit beta/HADHB described here bears the 3-ketoacyl-CoA thiolase activity. The sequence is that of Trifunctional enzyme subunit beta, mitochondrial (Hadhb) from Mus musculus (Mouse).